A 137-amino-acid chain; its full sequence is Large ribosomal subunit protein uL16 (137 aa).

Residues 1–20 are disordered; it reads MLQPKRTKFRKQQKMRNRGL.

Belongs to the universal ribosomal protein uL16 family. As to quaternary structure, part of the 50S ribosomal subunit.

Functionally, binds 23S rRNA and is also seen to make contacts with the A and possibly P site tRNAs. This Francisella philomiragia subsp. philomiragia (strain ATCC 25017 / CCUG 19701 / FSC 153 / O#319-036) protein is Large ribosomal subunit protein uL16.